The following is a 143-amino-acid chain: Transcriptional regulatory protein RosR (143 aa).

The C2H3-type zinc finger occupies 79–97 (CLECGGNFKSLKRHLMTHH).

It belongs to the ros/MucR family.

The polypeptide is Transcriptional regulatory protein RosR (rosR) (Rhizobium etli (strain ATCC 51251 / DSM 11541 / JCM 21823 / NBRC 15573 / CFN 42)).